Consider the following 161-residue polypeptide: Phosphopantetheine adenylyltransferase (161 aa).

Thr9 contacts substrate. Residues 9–10 (TF) and His17 contribute to the ATP site. Residues Lys41, Leu73, and Arg87 each coordinate substrate. Residues 88–90 (GLR), Glu98, and 123–129 (YQFISGT) contribute to the ATP site.

It belongs to the bacterial CoaD family. Homohexamer. It depends on Mg(2+) as a cofactor.

The protein resides in the cytoplasm. The enzyme catalyses (R)-4'-phosphopantetheine + ATP + H(+) = 3'-dephospho-CoA + diphosphate. Its pathway is cofactor biosynthesis; coenzyme A biosynthesis; CoA from (R)-pantothenate: step 4/5. Functionally, reversibly transfers an adenylyl group from ATP to 4'-phosphopantetheine, yielding dephospho-CoA (dPCoA) and pyrophosphate. This is Phosphopantetheine adenylyltransferase from Cupriavidus metallidurans (strain ATCC 43123 / DSM 2839 / NBRC 102507 / CH34) (Ralstonia metallidurans).